The chain runs to 920 residues: Ubiquitin ligase-binding protein BUL2 (920 aa).

A compositionally biased stretch (polar residues) spans 1 to 10 (MTFTFSTSSR). The tract at residues 1–89 (MTFTFSTSSR…EENSLEMDCT (89 aa)) is disordered. At Thr22 the chain carries Phosphothreonine. Residues 35–57 (QQLSSNSTDNSLHPNSGQTPRAS) are compositionally biased toward polar residues. Over residues 73–82 (DRLRQEREEN) the composition is skewed to basic and acidic residues. Positions 129–133 (FPPSY) match the PY-motif motif. The residue at position 557 (Ser557) is a Phosphoserine.

The protein belongs to the BUL1 family. As to quaternary structure, component of the RSP5-BUL1/2 ubiquitin ligase complex composed of at least RSP5 and BUL1 or BUL2.

The protein resides in the cytoplasm. Its pathway is protein modification; protein ubiquitination. Its function is as follows. Component of a RSP5 ubiquitin ligase complex which specifies polyubiquitination and intracellular trafficking of the general amino acid permease GAP1 as well as other permeases such as PMA1. The RSP5-BUL1/2 complex is also necessary for the heat-shock element (HSE)-mediated gene expression, nitrogen starvation GLN3-dependent transcription and pressure-induced differential regulation of the 2 tryptophan permeases TAT1 and TAT2. The protein is Ubiquitin ligase-binding protein BUL2 (BUL2) of Saccharomyces cerevisiae (strain ATCC 204508 / S288c) (Baker's yeast).